Consider the following 92-residue polypeptide: MKTLLLTLVVVTIVCLDLGDSLSCYLGYKRSQTCPPGEKVCFVKSWCDAFCGSRGKRIEMGCAATCPTVKDGIDITCCATDNCNTYANWGSG.

The first 21 residues, 1–21 (MKTLLLTLVVVTIVCLDLGDS), serve as a signal peptide directing secretion. Cystine bridges form between Cys24–Cys41, Cys34–Cys62, Cys47–Cys51, Cys66–Cys77, and Cys78–Cys83.

This sequence belongs to the three-finger toxin family. Long-chain subfamily. Type II alpha-neurotoxin sub-subfamily. As to expression, expressed by the venom gland.

Its subcellular location is the secreted. Its function is as follows. Binds with high affinity to muscular (alpha-1/CHRNA1) and neuronal (alpha-7/CHRNA7) nicotinic acetylcholine receptor (nAChR) and inhibits acetylcholine from binding to the receptor, thereby impairing neuromuscular and neuronal transmission. The chain is Alpha-elapitoxin-Lh2a from Hydrophis hardwickii (Hardwick's spine-bellied seasnake).